Reading from the N-terminus, the 249-residue chain is Molybdate/tungstate transport system permease protein WtpB (249 aa).

Topologically, residues 1–5 (MEKFD) are cytoplasmic. A helical membrane pass occupies residues 6 to 26 (IAMTVFLVMIFLFIFLPIIYM). The Extracellular portion of the chain corresponds to 27-48 (LSNPGDLNQLLDKEVIEAFKTT). One can recognise an ABC transmembrane type-1 domain in the interval 45-240 (FKTTLLAGAV…LISIALFALL (196 aa)). Residues 49–69 (LLAGAVATLIALIFGIPTGYI) traverse the membrane as a helical segment. At 70-93 (LARYDFKFKSFVEAVLDLPMAIPH) the chain is on the cytoplasmic side. Residues 94-114 (SVIGIIILSFIYGIDIINFIG) form a helical membrane-spanning segment. Topologically, residues 115-116 (RY) are extracellular. Residues 117–137 (VVDNFWGIVTVYLFVGIPFMV) traverse the membrane as a helical segment. Over 138–177 (NSIRDGFLSVDEEIEYVSRTLGASKIRTFFEISLPLIKNN) the chain is Cytoplasmic. The chain crosses the membrane as a helical span at residues 178 to 198 (IISGIILSFARGISEVGAILI). The Extracellular segment spans residues 199–223 (IAYYPKTVPILIYERFMSFGLDASK). The chain crosses the membrane as a helical span at residues 224 to 244 (PISVGMILISIALFALLRMFG). The Cytoplasmic segment spans residues 245 to 249 (RMRGR).

Belongs to the binding-protein-dependent transport system permease family. In terms of assembly, the complex is composed of two ATP-binding proteins (WtpC), two transmembrane proteins (WtpB) and a solute-binding protein (WtpA).

It localises to the cell membrane. In terms of biological role, part of the ABC transporter complex WtpABC involved in molybdate/tungstate import. Probably responsible for the translocation of the substrate across the membrane. The chain is Molybdate/tungstate transport system permease protein WtpB (wtpB) from Methanocaldococcus jannaschii (strain ATCC 43067 / DSM 2661 / JAL-1 / JCM 10045 / NBRC 100440) (Methanococcus jannaschii).